The following is a 206-amino-acid chain: MVVVMKFFRWVRRAWQRIISWVFFWRQKIKPTISGHPDSKKHSLKKMEKTLQVVETLRLVELPKEAKPKLGESPELADPCVLAKTTEETEVELGQQGQSLLQLPRTAVKSVSTLMVSALQSGWQMCSWKSSVSSASVSSQVRTQSPLKTPEAELLWEVYLVLWAVRKHLRRLYRRQERHRRHHVRCHAAPRPNPAQSLKLDAQSPL.

Residues 180–206 (RRHHVRCHAAPRPNPAQSLKLDAQSPL) form a disordered region.

Expressed in sperm (at protein level).

The protein localises to the cytoplasmic vesicle. It is found in the secretory vesicle. The protein resides in the acrosome. Its function is as follows. May play a role in acrosome formation and nucleus shaping during spermiogenesis. This chain is Sperm acrosome developmental regulator, found in Homo sapiens (Human).